A 314-amino-acid chain; its full sequence is Aspartate carbamoyltransferase catalytic subunit (314 aa).

The carbamoyl phosphate site is built by Arg55 and Thr56. Lys83 is a binding site for L-aspartate. Positions 105, 139, and 142 each coordinate carbamoyl phosphate. Arg172 and Arg226 together coordinate L-aspartate. Carbamoyl phosphate-binding residues include Gly267 and Pro268.

It belongs to the aspartate/ornithine carbamoyltransferase superfamily. ATCase family. As to quaternary structure, heterododecamer (2C3:3R2) of six catalytic PyrB chains organized as two trimers (C3), and six regulatory PyrI chains organized as three dimers (R2).

It carries out the reaction carbamoyl phosphate + L-aspartate = N-carbamoyl-L-aspartate + phosphate + H(+). Its pathway is pyrimidine metabolism; UMP biosynthesis via de novo pathway; (S)-dihydroorotate from bicarbonate: step 2/3. In terms of biological role, catalyzes the condensation of carbamoyl phosphate and aspartate to form carbamoyl aspartate and inorganic phosphate, the committed step in the de novo pyrimidine nucleotide biosynthesis pathway. In Rhodococcus opacus (strain B4), this protein is Aspartate carbamoyltransferase catalytic subunit.